A 377-amino-acid polypeptide reads, in one-letter code: DNA replication and repair protein RecF (377 aa).

30-37 (GLNGSGKT) provides a ligand contact to ATP.

It belongs to the RecF family.

It localises to the cytoplasm. The RecF protein is involved in DNA metabolism; it is required for DNA replication and normal SOS inducibility. RecF binds preferentially to single-stranded, linear DNA. It also seems to bind ATP. The protein is DNA replication and repair protein RecF of Cytophaga hutchinsonii (strain ATCC 33406 / DSM 1761 / CIP 103989 / NBRC 15051 / NCIMB 9469 / D465).